The primary structure comprises 86 residues: MSLLDYFKSKKKPNTAVTAKERLQIIVAHQRGERDAPDYFPQMKQEIIEVIKKYVHIDPDQVTVQLDQNDDKLSVLELNVTLPEEK.

This sequence belongs to the MinE family.

Its function is as follows. Prevents the cell division inhibition by proteins MinC and MinD at internal division sites while permitting inhibition at polar sites. This ensures cell division at the proper site by restricting the formation of a division septum at the midpoint of the long axis of the cell. The polypeptide is Cell division topological specificity factor (Shewanella sediminis (strain HAW-EB3)).